Here is a 224-residue protein sequence, read N- to C-terminus: 7-cyano-7-deazaguanine synthase (224 aa).

9–19 (ISGGMDSTLCA) is an ATP binding site. 4 residues coordinate Zn(2+): Cys190, Cys198, Cys201, and Cys204.

This sequence belongs to the QueC family. Zn(2+) is required as a cofactor.

The catalysed reaction is 7-carboxy-7-deazaguanine + NH4(+) + ATP = 7-cyano-7-deazaguanine + ADP + phosphate + H2O + H(+). It participates in purine metabolism; 7-cyano-7-deazaguanine biosynthesis. In terms of biological role, catalyzes the ATP-dependent conversion of 7-carboxy-7-deazaguanine (CDG) to 7-cyano-7-deazaguanine (preQ(0)). The chain is 7-cyano-7-deazaguanine synthase from Campylobacter jejuni subsp. doylei (strain ATCC BAA-1458 / RM4099 / 269.97).